The sequence spans 671 residues: UvrABC system protein B (671 aa).

The Helicase ATP-binding domain occupies 35 to 423; sequence KAIIENKKHQ…NHQVVQQIIR (389 aa). Residue 48-55 coordinates ATP; sequence GATGTGKT. The Beta-hairpin motif lies at 101–124; sequence NFDFFQPEAYIPSKDLYIDKDSRQ. One can recognise a Helicase C-terminal domain in the interval 440–602; sequence QIDDIINEIH…IVPKTISKAI (163 aa). One can recognise a UVR domain in the interval 632–667; the sequence is QQTIDNLRQEMLQAAKELDFERAAILRDTIIELENE.

This sequence belongs to the UvrB family. As to quaternary structure, forms a heterotetramer with UvrA during the search for lesions. Interacts with UvrC in an incision complex.

The protein localises to the cytoplasm. Its function is as follows. The UvrABC repair system catalyzes the recognition and processing of DNA lesions. A damage recognition complex composed of 2 UvrA and 2 UvrB subunits scans DNA for abnormalities. Upon binding of the UvrA(2)B(2) complex to a putative damaged site, the DNA wraps around one UvrB monomer. DNA wrap is dependent on ATP binding by UvrB and probably causes local melting of the DNA helix, facilitating insertion of UvrB beta-hairpin between the DNA strands. Then UvrB probes one DNA strand for the presence of a lesion. If a lesion is found the UvrA subunits dissociate and the UvrB-DNA preincision complex is formed. This complex is subsequently bound by UvrC and the second UvrB is released. If no lesion is found, the DNA wraps around the other UvrB subunit that will check the other stand for damage. The chain is UvrABC system protein B from Mycoplasma mycoides subsp. mycoides SC (strain CCUG 32753 / NCTC 10114 / PG1).